Reading from the N-terminus, the 123-residue chain is Small ribosomal subunit protein bS18 (123 aa).

Residues 1-10 (MADETTVSTP) are compositionally biased toward polar residues. The segment at 1–52 (MADETTVSTPAASGTETPSTGGGGAPQGRPQGGPRGDRGPRPGGSGRDGGRK) is disordered. The segment covering 20-34 (TGGGGAPQGRPQGGP) has biased composition (gly residues).

Belongs to the bacterial ribosomal protein bS18 family. As to quaternary structure, part of the 30S ribosomal subunit. Forms a tight heterodimer with protein bS6.

Functionally, binds as a heterodimer with protein bS6 to the central domain of the 16S rRNA, where it helps stabilize the platform of the 30S subunit. The chain is Small ribosomal subunit protein bS18 from Koribacter versatilis (strain Ellin345).